The primary structure comprises 201 residues: Natural cytotoxicity triggering receptor 3 (201 aa).

An N-terminal signal peptide occupies residues 1 to 18 (MAWMLLLILIMVYPGSCA). The Ig-like domain occupies 19–126 (LWVSQPPEIR…VGTGNGTRLV (108 aa)). At 19–133 (LWVSQPPEIR…RLVVEKEYPQ (115 aa)) the chain is on the extracellular side. Residues cysteine 39 and cysteine 108 are joined by a disulfide bond. Asparagine 42 and asparagine 121 each carry an N-linked (GlcNAc...) asparagine glycan. A helical membrane pass occupies residues 134-154 (LGAGTVLLLRAGFYAVSFLSV). The Cytoplasmic portion of the chain corresponds to 155–201 (AMGSTLYYQGKCLTWKGPRRQLPAVVPGPLPPPCGSSAHLLPPVPGG).

The protein belongs to the natural cytotoxicity receptor (NCR) family. In terms of assembly, homodimer in the unliganted form. Interacts with CD3Z. Interacts with and is activated by binding to NCR3LG1. Interacts with and is activated by binding to BAG6. Interacts with and is inhibited by binding to LGALS3.

It is found in the cell membrane. In terms of biological role, cell membrane receptor of natural killer/NK cells that is activated by binding of extracellular ligands including BAG6 and NCR3LG1. Stimulates NK cells cytotoxicity toward neighboring cells producing these ligands. It controls, for instance, NK cells cytotoxicity against tumor cells. Engagement of NCR3 by BAG6 also promotes myeloid dendritic cells (DC) maturation, both through killing DCs that did not acquire a mature phenotype, and inducing the release by NK cells of TNFA and IFNG that promote DC maturation. The protein is Natural cytotoxicity triggering receptor 3 (NCR3) of Macaca mulatta (Rhesus macaque).